Consider the following 159-residue polypeptide: Large ribosomal subunit protein uL15 (159 aa).

A disordered region spans residues 14–44; it reads ASRKRVGRGRATGWGCTSGRGNKGQNSRAGA. Over residues 23–35 the composition is skewed to gly residues; the sequence is RATGWGCTSGRGN.

It belongs to the universal ribosomal protein uL15 family. As to quaternary structure, part of the 50S ribosomal subunit.

Functionally, binds to the 23S rRNA. This Solidesulfovibrio magneticus (strain ATCC 700980 / DSM 13731 / RS-1) (Desulfovibrio magneticus) protein is Large ribosomal subunit protein uL15.